The chain runs to 371 residues: Peptidyl-prolyl cis-trans isomerase CPR6 (371 aa).

The 168-residue stretch at 7 to 174 (FFDISIGGKP…RDVKIDDCGV (168 aa)) folds into the PPIase cyclophilin-type domain. TPR repeat units lie at residues 219–252 (IETVKNIGTEQFKKQNYSVALEKYVKCDKFLKEY), 270–303 (VSIPLNIAICALKLKDYKQVLVASSEVLYAEAAD), and 308–341 (AKALYRRGLAYYHVNDTDMALNDLEMATTFQPND).

The protein belongs to the cyclophilin-type PPIase family. PPIase D subfamily. In terms of assembly, interacts with RPD3.

It is found in the cytoplasm. It carries out the reaction [protein]-peptidylproline (omega=180) = [protein]-peptidylproline (omega=0). Functionally, PPIases accelerate the folding of proteins. It catalyzes the cis-trans isomerization of proline imidic peptide bonds in oligopeptides. The protein is Peptidyl-prolyl cis-trans isomerase CPR6 (CPR6) of Saccharomyces cerevisiae (strain ATCC 204508 / S288c) (Baker's yeast).